A 692-amino-acid polypeptide reads, in one-letter code: UvrABC system protein B (692 aa).

The 387-residue stretch at 32 to 418 folds into the Helicase ATP-binding domain; the sequence is DNIENGEKAQ…QTDTIVEQII (387 aa). 45–52 contacts ATP; it reads GATGTGKT. The Beta-hairpin motif lies at 98-121; sequence YYDYYQPEAYVPSSDTYIEKDSSV. Positions 436–631 constitute a Helicase C-terminal domain; the sequence is QIDDLVGEIH…TIKKEIRDLI (196 aa). Residues 656-691 enclose the UVR domain; it reads KALVKKLEKEMQQAASALDFEGAAQLRDMVLELRAM.

This sequence belongs to the UvrB family. Forms a heterotetramer with UvrA during the search for lesions. Interacts with UvrC in an incision complex.

It localises to the cytoplasm. In terms of biological role, the UvrABC repair system catalyzes the recognition and processing of DNA lesions. A damage recognition complex composed of 2 UvrA and 2 UvrB subunits scans DNA for abnormalities. Upon binding of the UvrA(2)B(2) complex to a putative damaged site, the DNA wraps around one UvrB monomer. DNA wrap is dependent on ATP binding by UvrB and probably causes local melting of the DNA helix, facilitating insertion of UvrB beta-hairpin between the DNA strands. Then UvrB probes one DNA strand for the presence of a lesion. If a lesion is found the UvrA subunits dissociate and the UvrB-DNA preincision complex is formed. This complex is subsequently bound by UvrC and the second UvrB is released. If no lesion is found, the DNA wraps around the other UvrB subunit that will check the other stand for damage. This is UvrABC system protein B from Lactococcus lactis subsp. lactis (strain IL1403) (Streptococcus lactis).